The primary structure comprises 109 residues: Guanylate cyclase activator 2B (109 aa).

Residues 1–23 (MKVLALPVAVAAMLLVLAQNTQS) form the signal peptide. Residues 24–94 (VYIQYEGFQV…NIFRALRSIS (71 aa)) constitute a propeptide that is removed on maturation. 3 cysteine pairs are disulfide-bonded: C65–C78, C98–C106, and C101–C109.

It belongs to the guanylin family. In terms of tissue distribution, small and large intestine and atria and ventricles of heart. Both uroguanylin and prouroguanylin are found in plasma.

Its subcellular location is the secreted. Its function is as follows. Endogenous activator of intestinal guanylate cyclase. It stimulates this enzyme through the same receptor binding region as the heat-stable enterotoxins. May be a potent physiological regulator of intestinal fluid and electrolyte transport. May be an autocrine/paracrine regulator of intestinal salt and water transport. This is Guanylate cyclase activator 2B (GUCA2B) from Didelphis virginiana (North American opossum).